Here is a 507-residue protein sequence, read N- to C-terminus: Glycerol kinase (507 aa).

Thr12 is a binding site for ADP. 3 residues coordinate ATP: Thr12, Thr13, and Ser14. Thr12 contacts sn-glycerol 3-phosphate. ADP is bound at residue Arg16. Arg82, Glu83, Tyr134, and Asp250 together coordinate sn-glycerol 3-phosphate. Glycerol is bound by residues Arg82, Glu83, Tyr134, Asp250, and Gln251. ADP contacts are provided by Thr272 and Gly316. ATP-binding residues include Thr272, Gly316, Gln320, and Gly417. Residues Gly417 and Asn421 each coordinate ADP.

It belongs to the FGGY kinase family.

The enzyme catalyses glycerol + ATP = sn-glycerol 3-phosphate + ADP + H(+). Its pathway is polyol metabolism; glycerol degradation via glycerol kinase pathway; sn-glycerol 3-phosphate from glycerol: step 1/1. Its activity is regulated as follows. Inhibited by fructose 1,6-bisphosphate (FBP). Key enzyme in the regulation of glycerol uptake and metabolism. Catalyzes the phosphorylation of glycerol to yield sn-glycerol 3-phosphate. The chain is Glycerol kinase from Beijerinckia indica subsp. indica (strain ATCC 9039 / DSM 1715 / NCIMB 8712).